We begin with the raw amino-acid sequence, 147 residues long: Transthyretin (147 aa).

The signal sequence occupies residues 1-20 (MASHRLLLLCLAGLVFVSEA). At Cys-30 the chain carries Sulfocysteine. Lys-35 is an L-thyroxine binding site. At Glu-62 the chain carries 4-carboxyglutamate; in a patient with Moyamoya disease. The residue at position 72 (Ser-72) is a Phosphoserine. Glu-74 serves as a coordination point for L-thyroxine. An N-linked (GlcNAc...) asparagine glycan is attached at Asn-118. Ser-137 contributes to the L-thyroxine binding site.

This sequence belongs to the transthyretin family. In terms of assembly, homotetramer. Dimer of dimers. In the homotetramer, subunits assemble around a central channel that can accommodate two ligand molecules. Interacts with RBP4. In terms of processing, not glycosylated under normal conditions. Following unfolding, caused for example by variant AMYLD1 'Gly-38', the cryptic Asn-118 site is exposed and glycosylated by STT3B-containing OST complex, leading to its degradation by the ER-associated degradation (ERAD) pathway. Post-translationally, sulfonation of the reactive cysteine Cys-30 enhances the stability of the native conformation of TTR, avoiding misassembly of the protein leading to amyloid formation. Detected in serum and cerebrospinal fluid (at protein level). Highly expressed in choroid plexus epithelial cells. Detected in retina pigment epithelium and liver.

It is found in the secreted. The protein resides in the cytoplasm. In terms of biological role, thyroid hormone-binding protein. Probably transports thyroxine from the bloodstream to the brain. This Homo sapiens (Human) protein is Transthyretin (TTR).